The sequence spans 204 residues: Thymidylate kinase (204 aa).

Gly11–Thr18 serves as a coordination point for ATP.

This sequence belongs to the thymidylate kinase family.

The enzyme catalyses dTMP + ATP = dTDP + ADP. Its pathway is pyrimidine metabolism; dTTP biosynthesis. In Vaccinia virus (strain Ankara) (VACV), this protein is Thymidylate kinase (TMK).